The following is a 344-amino-acid chain: Protein RecA (344 aa).

65-72 (GPESSGKT) contributes to the ATP binding site. Positions 323–337 (ELREKFQPAEAPREA) are enriched in basic and acidic residues. The interval 323–344 (ELREKFQPAEAPREAGDDEDKE) is disordered.

Belongs to the RecA family.

Its subcellular location is the cytoplasm. Its function is as follows. Can catalyze the hydrolysis of ATP in the presence of single-stranded DNA, the ATP-dependent uptake of single-stranded DNA by duplex DNA, and the ATP-dependent hybridization of homologous single-stranded DNAs. It interacts with LexA causing its activation and leading to its autocatalytic cleavage. The polypeptide is Protein RecA (Xanthomonas axonopodis pv. citri (strain 306)).